The chain runs to 577 residues: E3 ubiquitin-protein ligase MSL2 (577 aa).

Positions 1–116 (MNPVNATALY…CEYITQTTLA (116 aa)) are sufficient for interaction with MSL1. The Zn(2+) site is built by C44, C47, C62, H64, C67, C70, C81, and C84. The RING-type zinc finger occupies 44 to 85 (CCVCGHLLQDPIAPTNSTCQHYVCKTCKGKKMMMKPSCSWCK). Residue K375 forms a Glycyl lysine isopeptide (Lys-Gly) (interchain with G-Cter in SUMO2) linkage. The interval 405–428 (TKSMKKSHEHGSKKSHSKSKPGIL) is disordered. A compositionally biased stretch (basic residues) spans 407–423 (SMKKSHEHGSKKSHSKS). Position 447 is a phosphoserine (S447). The CXC MSL2-type domain maps to 457–508 (QEKKGCKCGRATQNPSVLTCRGQRCPCYSNRKACLDCICRGCQNSYMANGEK). Residues C462, C464, C476, C481, C483, C490, C493, C495, and C498 each coordinate Zn(2+).

This sequence belongs to the MSL2 family. Component of a multisubunit histone acetyltransferase complex (MSL) at least composed of the KAT8/MOF/MYST1, MSL1/hampin, MSL2 and MSL3. Forms a MSL heterotetrameric core with MSL1.

It localises to the nucleus. The protein resides in the chromosome. The enzyme catalyses S-ubiquitinyl-[E2 ubiquitin-conjugating enzyme]-L-cysteine + [acceptor protein]-L-lysine = [E2 ubiquitin-conjugating enzyme]-L-cysteine + N(6)-ubiquitinyl-[acceptor protein]-L-lysine.. It functions in the pathway protein modification; protein ubiquitination. Its function is as follows. Non-catalytic component of the MSL histone acetyltransferase complex, a multiprotein complex that mediates the majority of histone H4 acetylation at 'Lys-16' (H4K16ac), an epigenetic mark that prevents chromatin compaction. The MSL complex is required for chromosome stability and genome integrity by maintaining homeostatic levels of H4K16ac. The MSL complex is also involved in gene dosage by promoting up-regulation of genes expressed by the X chromosome. X up-regulation is required to compensate for autosomal biallelic expression. The MSL complex also participates in gene dosage compensation by promoting expression of Tsix non-coding RNA. MSL2 plays a key role in gene dosage by ensuring biallelic expression of a subset of dosage-sensitive genes, including many haploinsufficient genes. Acts by promoting promoter-enhancer contacts, thereby preventing DNA methylation of one allele and creating a methylation-free environment for methylation-sensitive transcription factors such as SP1, KANSL1 and KANSL3. Also acts as an E3 ubiquitin ligase that promotes monoubiquitination of histone H2B at 'Lys-35' (H2BK34Ub), but not that of H2A. This activity is greatly enhanced by heterodimerization with MSL1. H2B ubiquitination in turn stimulates histone H3 methylation at 'Lys-4' (H3K4me) and 'Lys-79' (H3K79me) and leads to gene activation, including that of HOXA9 and MEIS1. This chain is E3 ubiquitin-protein ligase MSL2, found in Mus musculus (Mouse).